Here is a 494-residue protein sequence, read N- to C-terminus: Alpha-amylase-related protein (494 aa).

A signal peptide spans 1-20; the sequence is MFKFATAVILCLVAASSTLA. Position 21 is a pyrrolidone carboxylic acid (Gln21). Cys48 and Cys104 are oxidised to a cystine. The Ca(2+) site is built by Asn118, Gln169, and Asp178. A disulfide bond links Cys157 and Cys171. Arg206 is a binding site for chloride. Asp208 serves as the catalytic Nucleophile. Residue His212 participates in Ca(2+) binding. Catalysis depends on Glu245, which acts as the Proton donor. Chloride-binding residues include Asn308 and Arg343. Disulfide bonds link Cys376–Cys382, Cys418–Cys441, and Cys448–Cys460.

The protein belongs to the glycosyl hydrolase 13 family. Monomer. The cofactor is Ca(2+). Requires chloride as cofactor.

It is found in the secreted. The enzyme catalyses Endohydrolysis of (1-&gt;4)-alpha-D-glucosidic linkages in polysaccharides containing three or more (1-&gt;4)-alpha-linked D-glucose units.. This chain is Alpha-amylase-related protein (Amyrel), found in Drosophila bipectinata (Fruit fly).